The chain runs to 657 residues: Probable potassium transport system protein Kup (657 aa).

The next 12 helical transmembrane spans lie at 15 to 35 (SFLI…LYVM), 48 to 68 (ITPD…TLLT), 100 to 120 (WLII…MLTP), 147 to 167 (IIII…HFGT), 173 to 193 (IFGP…IVNL), 219 to 239 (LGFF…ALYS), 251 to 271 (LTWP…AAWI), 292 to 312 (MMPS…AIIA), 348 to 368 (IYMP…VLYF), 378 to 398 (YGLS…NYLL), 403 to 423 (PLPI…SFLI), and 431 to 451 (KGGF…YIWI).

It belongs to the HAK/KUP transporter (TC 2.A.72) family.

It localises to the cell membrane. It carries out the reaction K(+)(in) + H(+)(in) = K(+)(out) + H(+)(out). Transport of potassium into the cell. Likely operates as a K(+):H(+) symporter. This Clostridium perfringens (strain SM101 / Type A) protein is Probable potassium transport system protein Kup.